A 199-amino-acid chain; its full sequence is Recombination protein RecR (199 aa).

A C4-type zinc finger spans residues 57–72; that stretch reads CEICGNMDTKNICHIC. The 96-residue stretch at 80-175 folds into the Toprim domain; that stretch reads STIAIVETVA…KISRLASGIP (96 aa).

This sequence belongs to the RecR family.

Functionally, may play a role in DNA repair. It seems to be involved in an RecBC-independent recombinational process of DNA repair. It may act with RecF and RecO. This chain is Recombination protein RecR, found in Rickettsia typhi (strain ATCC VR-144 / Wilmington).